Here is a 380-residue protein sequence, read N- to C-terminus: Epoxyqueuosine reductase (380 aa).

The active-site Proton donor is the Asp134. In terms of domain architecture, 4Fe-4S ferredoxin-type 1 spans 179–208 (PPDQPIEDQCGSCTKCIDICPTGALIQGGQ). Cys188, Cys191, Cys194, Cys198, Cys214, Cys240, Cys243, and Cys247 together coordinate [4Fe-4S] cluster. The 4Fe-4S ferredoxin-type 2 domain maps to 226-258 (PEEYRDKIGNRIYGCDTCQTVCPKNKGMDFHNH).

It belongs to the QueG family. Monomer. Requires cob(II)alamin as cofactor. The cofactor is [4Fe-4S] cluster.

The protein localises to the cytoplasm. It carries out the reaction epoxyqueuosine(34) in tRNA + AH2 = queuosine(34) in tRNA + A + H2O. It participates in tRNA modification; tRNA-queuosine biosynthesis. Its function is as follows. Catalyzes the conversion of epoxyqueuosine (oQ) to queuosine (Q), which is a hypermodified base found in the wobble positions of tRNA(Asp), tRNA(Asn), tRNA(His) and tRNA(Tyr). The chain is Epoxyqueuosine reductase from Bacillus anthracis.